We begin with the raw amino-acid sequence, 136 residues long: MLQPKRTKFRKMQKGRNRGLSVNSEINFGKFGLKAIQRGRLTSRQIESARRAMSRSIKRQGKIWIRVFPDKPITKKPLEVRMGKGKGNVEYWVALIQPGKILYEIDEVSETIARYAFKLATAKLPITTTFVNKMVM.

Belongs to the universal ribosomal protein uL16 family. In terms of assembly, part of the 50S ribosomal subunit.

Functionally, binds 23S rRNA and is also seen to make contacts with the A and possibly P site tRNAs. This chain is Large ribosomal subunit protein uL16, found in Wigglesworthia glossinidia brevipalpis.